Here is a 197-residue protein sequence, read N- to C-terminus: Small ribosomal subunit protein uS4A (197 aa).

Residues 107–181 (RRLQTQVYKL…VARRNAARKA (75 aa)) enclose the S4 RNA-binding domain. A disordered region spans residues 160-197 (PTSPFGGARPGRVARRNAARKAEASGEAADEADEADEE). Lys-180 is covalently cross-linked (Glycyl lysine isopeptide (Lys-Gly) (interchain with G-Cter in ubiquitin)). Position 184 is a phosphoserine (Ser-184). A compositionally biased stretch (acidic residues) spans 187-197 (AADEADEADEE).

It belongs to the universal ribosomal protein uS4 family. As to quaternary structure, component of the small ribosomal subunit (SSU). Mature yeast ribosomes consist of a small (40S) and a large (60S) subunit. The 40S small subunit contains 1 molecule of ribosomal RNA (18S rRNA) and 33 different proteins (encoded by 57 genes). The large 60S subunit contains 3 rRNA molecules (25S, 5.8S and 5S rRNA) and 46 different proteins (encoded by 81 genes). Interacts with snoRNA U3. uS11 interacts with MPP10. Component of the ribosomal small subunit (SSU) processome composed of at least 40 protein subunits and snoRNA U3.

It is found in the cytoplasm. It localises to the nucleus. The protein localises to the nucleolus. In terms of biological role, component of the ribosome, a large ribonucleoprotein complex responsible for the synthesis of proteins in the cell. The small ribosomal subunit (SSU) binds messenger RNAs (mRNAs) and translates the encoded message by selecting cognate aminoacyl-transfer RNA (tRNA) molecules. The large subunit (LSU) contains the ribosomal catalytic site termed the peptidyl transferase center (PTC), which catalyzes the formation of peptide bonds, thereby polymerizing the amino acids delivered by tRNAs into a polypeptide chain. The nascent polypeptides leave the ribosome through a tunnel in the LSU and interact with protein factors that function in enzymatic processing, targeting, and the membrane insertion of nascent chains at the exit of the ribosomal tunnel. uS4 is involved in nucleolar processing of pre-18S ribosomal RNA and ribosome assembly. This is Small ribosomal subunit protein uS4A from Saccharomyces cerevisiae (strain ATCC 204508 / S288c) (Baker's yeast).